The primary structure comprises 193 residues: dTTP/UTP pyrophosphatase (193 aa).

Asp73 serves as the catalytic Proton acceptor.

It belongs to the Maf family. YhdE subfamily. It depends on a divalent metal cation as a cofactor.

The protein localises to the cytoplasm. It carries out the reaction dTTP + H2O = dTMP + diphosphate + H(+). The enzyme catalyses UTP + H2O = UMP + diphosphate + H(+). Its function is as follows. Nucleoside triphosphate pyrophosphatase that hydrolyzes dTTP and UTP. May have a dual role in cell division arrest and in preventing the incorporation of modified nucleotides into cellular nucleic acids. The sequence is that of dTTP/UTP pyrophosphatase from Caulobacter vibrioides (strain ATCC 19089 / CIP 103742 / CB 15) (Caulobacter crescentus).